Here is a 195-residue protein sequence, read N- to C-terminus: Imidazoleglycerol-phosphate dehydratase (195 aa).

This sequence belongs to the imidazoleglycerol-phosphate dehydratase family.

The protein resides in the cytoplasm. The catalysed reaction is D-erythro-1-(imidazol-4-yl)glycerol 3-phosphate = 3-(imidazol-4-yl)-2-oxopropyl phosphate + H2O. Its pathway is amino-acid biosynthesis; L-histidine biosynthesis; L-histidine from 5-phospho-alpha-D-ribose 1-diphosphate: step 6/9. This Ruegeria sp. (strain TM1040) (Silicibacter sp.) protein is Imidazoleglycerol-phosphate dehydratase.